We begin with the raw amino-acid sequence, 299 residues long: UDP-N-acetylenolpyruvoylglucosamine reductase (299 aa).

Residues 19-192 (LGGQALAEVR…AAVTLQLRRS (174 aa)) enclose the FAD-binding PCMH-type domain. Residue arginine 169 is part of the active site. Cysteine 221 (proton donor) is an active-site residue. Residue glutamate 292 is part of the active site.

This sequence belongs to the MurB family. The cofactor is FAD.

It is found in the cytoplasm. The enzyme catalyses UDP-N-acetyl-alpha-D-muramate + NADP(+) = UDP-N-acetyl-3-O-(1-carboxyvinyl)-alpha-D-glucosamine + NADPH + H(+). It functions in the pathway cell wall biogenesis; peptidoglycan biosynthesis. Functionally, cell wall formation. The polypeptide is UDP-N-acetylenolpyruvoylglucosamine reductase (Oleidesulfovibrio alaskensis (strain ATCC BAA-1058 / DSM 17464 / G20) (Desulfovibrio alaskensis)).